Here is a 278-residue protein sequence, read N- to C-terminus: Type II restriction enzyme AgeI (278 aa).

Belongs to the BsaWI type II restriction endonuclease family.

It carries out the reaction Endonucleolytic cleavage of DNA to give specific double-stranded fragments with terminal 5'-phosphates.. Functionally, a P subtype restriction enzyme that recognizes the double-stranded sequence 5'-ACCGGT-3' and cleaves after A-1. The polypeptide is Type II restriction enzyme AgeI (ageIR) (Thalassovita gelatinovora (Thalassobius gelatinovorus)).